Consider the following 430-residue polypeptide: Tektin-2 (430 aa).

2 coiled-coil regions span residues 80–162 (KCLT…FEQL) and 225–382 (NKDR…CKAN).

It belongs to the tektin family. In terms of assembly, microtubule inner protein component of sperm flagellar doublet microtubules. May interact with CCDC172. Post-translationally, tyrosine phosphorylated. In terms of processing, ubiquitinated, leading to its degradation. Deubiquitinated by USP16, promoting its stability. As to expression, expressed at high levels in testis, trachea and fetal lung, and at lower levels in ovary, pituitary, adult lung, fetal brain and fetal kidney.

It is found in the cytoplasm. The protein resides in the cytoskeleton. Its subcellular location is the cilium axoneme. It localises to the flagellum axoneme. The protein localises to the microtubule organizing center. Its function is as follows. Microtubule inner protein (MIP) part of the dynein-decorated doublet microtubules (DMTs) in cilia and flagellar axoneme. Plays a key role in the assembly or attachment of the inner dynein arm to microtubules in sperm flagella and tracheal cilia. Forms filamentous polymers in the walls of ciliary and flagellar microtubules. The polypeptide is Tektin-2 (Homo sapiens (Human)).